We begin with the raw amino-acid sequence, 668 residues long: Tyrosine-protein phosphatase non-receptor type ptp-2 (668 aa).

SH2 domains follow at residues 10–113 (NFYY…KKPV) and 134–232 (WWHG…EEPL). Positions 264–580 (ISEEFDRLSQ…QFLYKALAFY (317 aa)) constitute a Tyrosine-protein phosphatase domain. Cysteine 518 functions as the Phosphocysteine intermediate in the catalytic mechanism. Residues 603–668 (PRRLRPTPNA…SSTLLKSTKK (66 aa)) are disordered. Composition is skewed to low complexity over residues 616 to 634 (SSAR…SSRT) and 652 to 668 (STSS…STKK).

This sequence belongs to the protein-tyrosine phosphatase family. Non-receptor class 2 subfamily. Expressed in embryonic cells, developing vulva, body wall muscles, head neurons and gonadal sheath cells.

The protein localises to the cytoplasm. The enzyme catalyses O-phospho-L-tyrosyl-[protein] + H2O = L-tyrosyl-[protein] + phosphate. Functionally, involved in embryonic and larval development. Plays a role in oogenesis by regulating mpk-1 phosphorylation and oocyte maturation in response to major sperm protein (MSP). During the formation of neuromuscular junctions at the larval stage, negatively regulates membrane protrusion from body wall muscles probably downstream of receptor egl-15. Plays a role in fluid homeostasis probably downstream of receptor egl-15 and adapter soc-1. Promotes vulva induction and negatively regulates fertility probably downstream of receptor let-23. Negatively regulates daf-2-mediated repression of dauer formation. This is Tyrosine-protein phosphatase non-receptor type ptp-2 from Caenorhabditis elegans.